The primary structure comprises 541 residues: Putative acyl-CoA dehydrogenase AidB (541 aa).

FAD is bound by residues 182 to 191, Thr-185, Ser-191, 216 to 218, Ser-218, 423 to 433, and Asn-429; these read MGMTEKQGGS, FFS, and IWEGSGNIMCL. The segment at 445–541 is dsDNA-binding; the sequence is VYDLLSEAFV…LLRATGGVCV (97 aa).

Belongs to the acyl-CoA dehydrogenase family. In terms of assembly, homotetramer. Dimer of dimers. FAD is required as a cofactor.

Its subcellular location is the cytoplasm. Functionally, part of the adaptive DNA-repair response to alkylating agents. Could prevent alkylation damage by protecting DNA and destroying alkylating agents that have yet to reach their DNA target. Binds to double-stranded DNA with a preference for a DNA region that includes its own promoter. Shows weak isovaleryl-CoA dehydrogenase activity in vitro. The sequence is that of Putative acyl-CoA dehydrogenase AidB (aidB) from Escherichia coli (strain K12).